The chain runs to 78 residues: RNA-binding protein KhpA (78 aa).

One can recognise a KH domain in the interval 29-78 (TIIYELSVAKPDIGKIIGKEGRTIKAIRTLLVSVASRNNVRVSLEIMEEK).

This sequence belongs to the KhpA RNA-binding protein family.

The protein resides in the cytoplasm. Its function is as follows. A probable RNA-binding protein. In Chlamydia pneumoniae (Chlamydophila pneumoniae), this protein is RNA-binding protein KhpA.